Consider the following 633-residue polypeptide: Cyclic GMP-AMP synthase-like receptor 1 (633 aa).

3 disordered regions span residues 23–80, 107–214, and 250–276; these read KVHG…HPHT, FKGP…TDPF, and REDD…RPSS. The span at 29–67 shows a compositional bias: basic and acidic residues; sequence KQHESAHPPRERHTERTATKRSDETKTASRPTASHEGKT. Over residues 68–80 the composition is skewed to polar residues; sequence HTTNPRGQVHPHT. 3 stretches are compositionally biased toward basic and acidic residues: residues 125–143, 176–194, and 250–274; these read RKPE…DHRT, RKPD…DHRT, and REDD…DDRP. Mg(2+) is bound by residues E353, D355, and D455.

The protein belongs to the mab-21 family. Mg(2+) is required as a cofactor. It depends on Mn(2+) as a cofactor.

It catalyses the reaction UTP + ATP = 2',3'-cUAMP + 2 diphosphate. Its function is as follows. Nucleotidyltransferase that catalyzes the formation of cyclic UMP-AMP (2',3'-cUAMP) from ATP and UTP and plays a key role in innate immunity. Acts as a key sensor of double-stranded DNA (dsDNA), the presence of dsDNA in the cytoplasm being a danger signal that triggers the immune responses. Directly binds dsDNA, activating the nucleotidyltransferase activity, leading to synthesis of 2',3'-cUAMP, a second messenger that binds to and activates Sting, thereby triggering the immune response via activation of the NF-kappa-B transcription factor. The chain is Cyclic GMP-AMP synthase-like receptor 1 from Crassostrea virginica (Eastern oyster).